The chain runs to 89 residues: Small ribosomal subunit protein uS15 (89 aa).

Belongs to the universal ribosomal protein uS15 family. Part of the 30S ribosomal subunit. Forms a bridge to the 50S subunit in the 70S ribosome, contacting the 23S rRNA.

Its function is as follows. One of the primary rRNA binding proteins, it binds directly to 16S rRNA where it helps nucleate assembly of the platform of the 30S subunit by binding and bridging several RNA helices of the 16S rRNA. Forms an intersubunit bridge (bridge B4) with the 23S rRNA of the 50S subunit in the ribosome. This Solibacter usitatus (strain Ellin6076) protein is Small ribosomal subunit protein uS15.